The following is a 202-amino-acid chain: Peptide methionine sulfoxide reductase B1, chloroplastic (202 aa).

The N-terminal 63 residues, 1–63, are a transit peptide targeting the chloroplast; sequence MASSTRLTII…SSSPKPDNVQ (63 aa). The tract at residues 48–67 is disordered; that stretch reads YSMGSSSSSPKPDNVQEAEK. The 123-residue stretch at 75–197 folds into the MsrB domain; that stretch reads ENEWKKRLTP…NSAALKLNAL (123 aa). Zn(2+) contacts are provided by C114, C117, C163, and C166. Catalysis depends on C186, which acts as the Nucleophile.

It belongs to the MsrB Met sulfoxide reductase family. Requires Zn(2+) as cofactor. As to expression, expressed at low levels in stems, leaves, floral buds, flowers and siliques (at protein level).

The protein localises to the plastid. The protein resides in the chloroplast. It catalyses the reaction L-methionyl-[protein] + [thioredoxin]-disulfide + H2O = L-methionyl-(R)-S-oxide-[protein] + [thioredoxin]-dithiol. Its function is as follows. Catalyzes the reduction of methionine sulfoxide (MetSO) to methionine in proteins. Specifically reduces the MetSO R-enantiomer. Plays a protective role against oxidative stress by restoring activity to proteins that have been inactivated by methionine oxidation. May play an essential function in association with MSRB2 in maintaining vegetative growth during environmental constraints, through the preservation of photosynthetic antennae. MSRB1 and MSRB2 account for most of the leaf peptide MSR capacity. The sequence is that of Peptide methionine sulfoxide reductase B1, chloroplastic from Arabidopsis thaliana (Mouse-ear cress).